The chain runs to 685 residues: Tripartite terminase subunit 1 (685 aa).

The C3H1-type zinc finger occupies 173-201; that stretch reads CWRCVGELMVLPNHGNPSTAEGTHVSCNH. Disordered regions lie at residues 231–254 and 394–423; these read EEKARPGGPEEGAVPGPGRPEAEG and LGRGEEEASRESPEVPRPAGAREPGPSGAL. Positions 395 to 407 are enriched in basic and acidic residues; it reads GRGEEEASRESPE. Residue 619-626 coordinates ATP; that stretch reads YNKTWGRS.

It belongs to the herpesviridae TRM1 protein family. Associates with TRM2 and TRM3 to form the tripartite terminase complex. Interacts with portal protein.

The protein localises to the host nucleus. Functionally, component of the molecular motor that translocates viral genomic DNA in empty capsid during DNA packaging. Forms a tripartite terminase complex together with TRM2 and TRM3 in the host cytoplasm. Once the complex reaches the host nucleus, it interacts with the capsid portal vertex. This portal forms a ring in which genomic DNA is translocated into the capsid. TRM1 carries an endonuclease activity that plays an important role for the cleavage of concatemeric viral DNA into unit length genomes. The polypeptide is Tripartite terminase subunit 1 (Epstein-Barr virus (strain B95-8) (HHV-4)).